A 169-amino-acid polypeptide reads, in one-letter code: Group 2 truncated hemoglobin 3-2 (169 aa).

H99 contributes to the heme b binding site.

The protein belongs to the truncated hemoglobin family. Group II subfamily. Homodimer when ferric.

In terms of biological role, hemoglobin-like protein that exhibits an unusual concentration-independent binding of O(2) and CO. Required for general plant development and during nodulation. May promote shoot organogenesis from root explants. This Medicago truncatula (Barrel medic) protein is Group 2 truncated hemoglobin 3-2.